A 259-amino-acid polypeptide reads, in one-letter code: Putative zinc metalloprotease Rip2 (259 aa).

2 helical membrane-spanning segments follow: residues 14-34 (PIFL…WIAA) and 39-59 (PLSY…SLCL). A Zn(2+)-binding site is contributed by H60. E61 is an active-site residue. Position 64 (H64) interacts with Zn(2+). The next 4 membrane-spanning stretches (helical) occupy residues 96 to 116 (LGLP…GAVY), 129 to 149 (IVSL…LGLT), 159 to 179 (VFWS…VLNL), and 203 to 223 (LAPA…TPAL).

This sequence belongs to the peptidase M50B family. Zn(2+) is required as a cofactor.

The protein resides in the cell membrane. The sequence is that of Putative zinc metalloprotease Rip2 (rip2) from Mycolicibacterium smegmatis (strain ATCC 700084 / mc(2)155) (Mycobacterium smegmatis).